The sequence spans 158 residues: Probable deoxyuridine 5'-triphosphate nucleotidohydrolase (158 aa).

It belongs to the dUTPase family. The cofactor is Mg(2+).

The enzyme catalyses dUTP + H2O = dUMP + diphosphate + H(+). The protein operates within pyrimidine metabolism; dUMP biosynthesis; dUMP from dCTP (dUTP route): step 1/2. Functionally, this enzyme is involved in nucleotide metabolism: it produces dUMP, the immediate precursor of thymidine nucleotides and it decreases the intracellular concentration of dUTP so that uracil cannot be incorporated into DNA. It does probably not deaminate dCTP. The sequence is that of Probable deoxyuridine 5'-triphosphate nucleotidohydrolase from Sulfolobus islandicus rod-shaped virus 1 (SIRV-1).